Here is a 624-residue protein sequence, read N- to C-terminus: Chaperone protein HtpG (624 aa).

The segment at 1–336 (MKGQETRGFQ…SNDLPLNVSR (336 aa)) is a; substrate-binding. A b region spans residues 337–552 (EILQDSTVTR…ADEMSTQMAK (216 aa)). Residues 553-624 (LFAAAGQSVP…IRRMNQLLVS (72 aa)) are c.

It belongs to the heat shock protein 90 family. As to quaternary structure, homodimer.

Its subcellular location is the cytoplasm. Its function is as follows. Molecular chaperone. Has ATPase activity. This is Chaperone protein HtpG from Salmonella paratyphi B (strain ATCC BAA-1250 / SPB7).